Consider the following 293-residue polypeptide: Ribokinase (293 aa).

Residues 11–13, 39–43, and Glu-139 contribute to the substrate site; these read SMD and GKGAN. Residues Asn-183 and 210–215 each bind ATP; that span reads TEGKQG. K(+)-binding residues include Asp-236 and Thr-238. Residues 241–242 and Asn-266 each bind ATP; that span reads GD. Asp-242 provides a ligand contact to substrate. Catalysis depends on Asp-242, which acts as the Proton acceptor. Ser-272, Ser-275, and Gly-277 together coordinate K(+).

This sequence belongs to the carbohydrate kinase PfkB family. Ribokinase subfamily. As to quaternary structure, homodimer. Requires Mg(2+) as cofactor.

It localises to the cytoplasm. It catalyses the reaction D-ribose + ATP = D-ribose 5-phosphate + ADP + H(+). The protein operates within carbohydrate metabolism; D-ribose degradation; D-ribose 5-phosphate from beta-D-ribopyranose: step 2/2. With respect to regulation, activated by a monovalent cation that binds near, but not in, the active site. The most likely occupant of the site in vivo is potassium. Ion binding induces a conformational change that may alter substrate affinity. Catalyzes the phosphorylation of ribose at O-5 in a reaction requiring ATP and magnesium. The resulting D-ribose-5-phosphate can then be used either for sythesis of nucleotides, histidine, and tryptophan, or as a component of the pentose phosphate pathway. This is Ribokinase from Bacillus subtilis (strain 168).